We begin with the raw amino-acid sequence, 284 residues long: Phosphonates import ATP-binding protein PhnC 2 (284 aa).

The 241-residue stretch at 24–264 (IRIDGISVRR…LEARIFPSLA (241 aa)) folds into the ABC transporter domain. 56-63 (GPSGVGKT) lines the ATP pocket.

Belongs to the ABC transporter superfamily. Phosphonates importer (TC 3.A.1.9.1) family. In terms of assembly, the complex is composed of two ATP-binding proteins (PhnC), two transmembrane proteins (PhnE) and a solute-binding protein (PhnD).

It is found in the cell inner membrane. It carries out the reaction phosphonate(out) + ATP + H2O = phosphonate(in) + ADP + phosphate + H(+). Its function is as follows. Part of the ABC transporter complex PhnCDE involved in phosphonates import. Responsible for energy coupling to the transport system. The sequence is that of Phosphonates import ATP-binding protein PhnC 2 from Rhodopseudomonas palustris (strain ATCC BAA-98 / CGA009).